The sequence spans 219 residues: Ras-related protein Rab-3 (219 aa).

GTP contacts are provided by residues 29 to 37 (GNSSVGKTS), 48 to 54 (TSAFVST), 77 to 81 (DTAGQ), 135 to 138 (NKCD), and 165 to 167 (SAK). The Effector region motif lies at 51–59 (FVSTVGIDF). The disordered stretch occupies residues 191–219 (LDKDPQQQPKGQKLEANPTQKPAQQQCNC). Residues 207-219 (NPTQKPAQQQCNC) show a composition bias toward polar residues. 2 S-geranylgeranyl cysteine lipidation sites follow: C217 and C219. C219 carries the post-translational modification Cysteine methyl ester.

This sequence belongs to the small GTPase superfamily. Rab family.

Its subcellular location is the cell membrane. Functionally, involved in exocytosis by regulating a late step in synaptic vesicle fusion. Could play a role in neurotransmitter release by regulating membrane flow in the nerve terminal. Plays a role in the recruitment of endophilin unc-57 to synaptic vesicles. Probably by controlling dense-core vesicle trafficking, plays a role in the AVG neuron-mediated formation of the right axon tract of the ventral nerve cord. This is Ras-related protein Rab-3 (rab-3) from Caenorhabditis elegans.